Here is an 86-residue protein sequence, read N- to C-terminus: Putative membrane protein insertion efficiency factor (86 aa).

The interval 66–86 (AGGHDPVPPVPPQRYPSAQEH) is disordered.

It belongs to the UPF0161 family.

It is found in the cell inner membrane. Could be involved in insertion of integral membrane proteins into the membrane. This chain is Putative membrane protein insertion efficiency factor, found in Nitratidesulfovibrio vulgaris (strain ATCC 29579 / DSM 644 / CCUG 34227 / NCIMB 8303 / VKM B-1760 / Hildenborough) (Desulfovibrio vulgaris).